An 86-amino-acid chain; its full sequence is Apolipoprotein C-I (86 aa).

The signal sequence occupies residues Met1–Gly26.

The protein belongs to the apolipoprotein C1 family.

It is found in the secreted. Its function is as follows. Inhibitor of lipoprotein binding to the low density lipoprotein (LDL) receptor, LDL receptor-related protein, and very low density lipoprotein (VLDL) receptor. Associates with high density lipoproteins (HDL) and the triacylglycerol-rich lipoproteins in the plasma and makes up about 10% of the protein of the VLDL and 2% of that of HDL. Appears to interfere directly with fatty acid uptake and is also the major plasma inhibitor of cholesteryl ester transfer protein (CETP). Binds free fatty acids and reduces their intracellular esterification. Modulates the interaction of APOE with beta-migrating VLDL and inhibits binding of beta-VLDL to the LDL receptor-related protein. The sequence is that of Apolipoprotein C-I (APOC1) from Saimiri boliviensis boliviensis (Bolivian squirrel monkey).